Here is a 308-residue protein sequence, read N- to C-terminus: Acetyl-coenzyme A carboxylase carboxyl transferase subunit beta 1 (308 aa).

Positions 25 to 294 constitute a CoA carboxyltransferase N-terminal domain; the sequence is VWTKCTSCEQ…PLVVSVNESP (270 aa). Zn(2+)-binding residues include cysteine 29, cysteine 32, cysteine 48, and cysteine 51. The C4-type zinc finger occupies 29–51; sequence CTSCEQVLYHAELERNLEVCPKC. The disordered stretch occupies residues 288–308; it reads VSVNESPNEEPYSVPEVDEKG.

This sequence belongs to the AccD/PCCB family. Acetyl-CoA carboxylase is a heterohexamer composed of biotin carboxyl carrier protein (AccB), biotin carboxylase (AccC) and two subunits each of ACCase subunit alpha (AccA) and ACCase subunit beta (AccD). Zn(2+) serves as cofactor.

Its subcellular location is the cytoplasm. The enzyme catalyses N(6)-carboxybiotinyl-L-lysyl-[protein] + acetyl-CoA = N(6)-biotinyl-L-lysyl-[protein] + malonyl-CoA. It participates in lipid metabolism; malonyl-CoA biosynthesis; malonyl-CoA from acetyl-CoA: step 1/1. Its function is as follows. Component of the acetyl coenzyme A carboxylase (ACC) complex. Biotin carboxylase (BC) catalyzes the carboxylation of biotin on its carrier protein (BCCP) and then the CO(2) group is transferred by the transcarboxylase to acetyl-CoA to form malonyl-CoA. The chain is Acetyl-coenzyme A carboxylase carboxyl transferase subunit beta 1 from Vibrio parahaemolyticus serotype O3:K6 (strain RIMD 2210633).